Consider the following 331-residue polypeptide: Smad-related protein daf-14 (331 aa).

Residues 134–331 form the MH2 domain; that stretch reads WCTIFYYELT…NERPEIGSRS (198 aa). The interval 168–187 is disordered; that stretch reads ECRMSLTSQPSSRNSKSSQI. Positions 175–185 are enriched in low complexity; it reads SQPSSRNSKSS.

In terms of assembly, interacts with R-SMAD daf-8 and co-SMAD daf-3. Interacts with daf-3 in a daf-8 dependent manner.

Probably an atypical receptor-regulated SMAD (R-SMAD) that is an intracellular signal transducer and transcriptional modulator activated by TGF-beta-like daf-7 signaling. Plays a role in TGF-beta-like daf-7 signaling in regulating entry into a developmentally arrested larval state known as dauer, in response to harsh environmental conditions; partially redundant with R-SMAD daf-8. This is Smad-related protein daf-14 from Caenorhabditis elegans.